Here is a 77-residue protein sequence, read N- to C-terminus: Acyl carrier protein (77 aa).

Positions 1–76 (MAVFDEVKDV…DVVNYIDGLK (76 aa)) constitute a Carrier domain. Ser-36 is subject to O-(pantetheine 4'-phosphoryl)serine.

Belongs to the acyl carrier protein (ACP) family. Post-translationally, 4'-phosphopantetheine is transferred from CoA to a specific serine of apo-ACP by AcpS. This modification is essential for activity because fatty acids are bound in thioester linkage to the sulfhydryl of the prosthetic group.

It is found in the cytoplasm. It functions in the pathway lipid metabolism; fatty acid biosynthesis. Carrier of the growing fatty acid chain in fatty acid biosynthesis. This chain is Acyl carrier protein, found in Campylobacter fetus subsp. fetus (strain 82-40).